The sequence spans 725 residues: Catalase-peroxidase (725 aa).

A cross-link (tryptophyl-tyrosyl-methioninium (Trp-Tyr) (with M-253)) is located at residues 99–227 (WHAAGTYRIA…LAAVMMGLIY (129 aa)). Residue H100 is the Proton acceptor of the active site. A cross-link (tryptophyl-tyrosyl-methioninium (Tyr-Met) (with W-99)) is located at residues 227–253 (YVNPEGVDGNPDPLKTAHDIRITFSRM). H268 provides a ligand contact to heme b.

Belongs to the peroxidase family. Peroxidase/catalase subfamily. Homodimer or homotetramer. Heme b is required as a cofactor. Formation of the three residue Trp-Tyr-Met cross-link is important for the catalase, but not the peroxidase activity of the enzyme.

It catalyses the reaction H2O2 + AH2 = A + 2 H2O. It carries out the reaction 2 H2O2 = O2 + 2 H2O. In terms of biological role, bifunctional enzyme with both catalase and broad-spectrum peroxidase activity. This Picosynechococcus sp. (strain ATCC 27264 / PCC 7002 / PR-6) (Agmenellum quadruplicatum) protein is Catalase-peroxidase.